The following is a 127-amino-acid chain: Small ribosomal subunit protein bS16 (127 aa).

Residues 80 to 127 (GLKKRPTRNNPHKGEPGKKAQERIAAAKQAAEEAAAAKTESAPISEEV) are disordered. Basic residues predominate over residues 81 to 90 (LKKRPTRNNP). Residues 91–101 (HKGEPGKKAQE) are compositionally biased toward basic and acidic residues. Positions 102 to 121 (RIAAAKQAAEEAAAAKTESA) are enriched in low complexity.

Belongs to the bacterial ribosomal protein bS16 family.

This Bartonella henselae (strain ATCC 49882 / DSM 28221 / CCUG 30454 / Houston 1) (Rochalimaea henselae) protein is Small ribosomal subunit protein bS16.